The chain runs to 46 residues: Photosystem II reaction center protein K (46 aa).

The propeptide occupies Met-1–Ala-9. A helical membrane pass occupies residues Leu-25–Phe-45.

The protein belongs to the PsbK family. As to quaternary structure, PSII is composed of 1 copy each of membrane proteins PsbA, PsbB, PsbC, PsbD, PsbE, PsbF, PsbH, PsbI, PsbJ, PsbK, PsbL, PsbM, PsbT, PsbX, PsbY, PsbZ, Psb30/Ycf12, at least 3 peripheral proteins of the oxygen-evolving complex and a large number of cofactors. It forms dimeric complexes.

Its subcellular location is the plastid. It localises to the chloroplast thylakoid membrane. In terms of biological role, one of the components of the core complex of photosystem II (PSII). PSII is a light-driven water:plastoquinone oxidoreductase that uses light energy to abstract electrons from H(2)O, generating O(2) and a proton gradient subsequently used for ATP formation. It consists of a core antenna complex that captures photons, and an electron transfer chain that converts photonic excitation into a charge separation. The chain is Photosystem II reaction center protein K from Stigeoclonium helveticum (Green alga).